Consider the following 136-residue polypeptide: Congerin-2 (136 aa).

The residue at position 2 (serine 2) is an N-acetylserine. The Galectin domain maps to 4–136 (RAEVRNIPFK…DARLTFVRLE (133 aa)). Residue 70 to 76 (WQQEERS) participates in a beta-D-galactoside binding.

As to quaternary structure, homodimer.

Functionally, this protein binds beta-galactoside. Its physiological function is not yet known. In Conger myriaster (Conger eel), this protein is Congerin-2.